The chain runs to 677 residues: Methionine--tRNA ligase (677 aa).

A 'HIGH' region motif is present at residues 15–25 (PYANGSIHLGH). 4 residues coordinate Zn(2+): Cys146, Cys149, Cys159, and Cys162. The 'KMSKS' region signature appears at 333-337 (KMSKS). An ATP-binding site is contributed by Lys336. Positions 575–677 (DFAKVDLRVA…AGAKPGHQVK (103 aa)) constitute a tRNA-binding domain.

The protein belongs to the class-I aminoacyl-tRNA synthetase family. MetG type 1 subfamily. Homodimer. Requires Zn(2+) as cofactor.

It localises to the cytoplasm. The enzyme catalyses tRNA(Met) + L-methionine + ATP = L-methionyl-tRNA(Met) + AMP + diphosphate. Is required not only for elongation of protein synthesis but also for the initiation of all mRNA translation through initiator tRNA(fMet) aminoacylation. In Shigella sonnei (strain Ss046), this protein is Methionine--tRNA ligase.